A 98-amino-acid chain; its full sequence is Flagellar hook-basal body complex protein FliE (98 aa).

A disordered region spans residues 22-56 (KTDNATGAGNTFTQMLDSMSDTQSNAQTSVSNLLT). Residues 23 to 56 (TDNATGAGNTFTQMLDSMSDTQSNAQTSVSNLLT) are compositionally biased toward polar residues.

This sequence belongs to the FliE family.

It localises to the bacterial flagellum basal body. The protein is Flagellar hook-basal body complex protein FliE of Listeria innocua serovar 6a (strain ATCC BAA-680 / CLIP 11262).